The following is a 130-amino-acid chain: Small ribosomal subunit protein uS9 (130 aa).

This sequence belongs to the universal ribosomal protein uS9 family.

This chain is Small ribosomal subunit protein uS9, found in Stutzerimonas stutzeri (strain A1501) (Pseudomonas stutzeri).